A 474-amino-acid chain; its full sequence is MSIKVTQEKLPASRVGLQIEVSGEQSRQVYERTLTRLSREVRFPGFRPGKVPRPVLIQRLGETALKANAIEDLVQQSLESAIAQESIPAIGNYQLSSDFETLVAAFQPGESFSFEASVDVQPTATLAQYTGLTVEVAEVPFDANRVDNVLAEQQKQMATLVPVEGRNAAIGDVAVIDFQGILVESGEEIPGGSGTDFQIEVEEDRFIPGFISGIVGMAIEETRTVDATFPETYAQEEVAGKAAQFTITLKELKTRDLPELDDAFAQEASQYETIEELKTALTERFQAEHESEVKASKRDAILTALADQLDVEIPESLLQREISAMINETASRLSGQGMDVRKLFTEEVLERLRENSKDEAEQRLRRTIALGELAKVTETQVDDEAVKARAAELLSNYPRPQEIDRDRLNTVVREELLEDKLLEWFEANNSVTFVAPKAAETEVDAASATVETTATETAEEAPEAPKAKKGKKKA.

In terms of domain architecture, PPIase FKBP-type spans Gly-171–Pro-258. Residues Thr-441–Ala-474 form a disordered region. Residues Asp-444–Glu-456 are compositionally biased toward low complexity.

This sequence belongs to the FKBP-type PPIase family. Tig subfamily.

The protein resides in the cytoplasm. The enzyme catalyses [protein]-peptidylproline (omega=180) = [protein]-peptidylproline (omega=0). Functionally, involved in protein export. Acts as a chaperone by maintaining the newly synthesized protein in an open conformation. Functions as a peptidyl-prolyl cis-trans isomerase. In Synechococcus elongatus (strain ATCC 33912 / PCC 7942 / FACHB-805) (Anacystis nidulans R2), this protein is Trigger factor.